The sequence spans 384 residues: Na(+)/H(+) antiporter NhaA (384 aa).

The next 11 helical transmembrane spans lie at 9–29 (NLET…IIIA), 58–78 (LLLW…GLEI), 94–114 (LVPA…FIFF), 124–144 (GWAI…SLLG), 153–173 (ILLT…IALF), 179–199 (SLLS…LNYF), 204–224 (ISVF…SGVH), 256–276 (VVFL…FVGL), 285–305 (VVLG…FLSL), 325–345 (VYGI…IGSL), and 357–377 (MVKI…FLVL).

Belongs to the NhaA Na(+)/H(+) (TC 2.A.33) antiporter family.

The protein localises to the cell inner membrane. The catalysed reaction is Na(+)(in) + 2 H(+)(out) = Na(+)(out) + 2 H(+)(in). Na(+)/H(+) antiporter that extrudes sodium in exchange for external protons. This chain is Na(+)/H(+) antiporter NhaA, found in Legionella pneumophila (strain Lens).